The sequence spans 375 residues: Adiponectin receptor protein 1 (375 aa).

Residues 1–60 (MSSHKGSAGAQGNGAPSGNREADTVELAELGPLLEEKGKRAASSPAKAEEDQACPVPQEE) form a disordered region. Topologically, residues 1–136 (MSSHKGSAGA…SIFRIHTETG (136 aa)) are cytoplasmic. A helical transmembrane segment spans residues 137–157 (NIWTHLLGFVLFLFLGILTML). Residues 158–170 (RPNMYFMAPLQEK) are Extracellular-facing. A helical membrane pass occupies residues 171 to 191 (VVFGMFFLGAVLCLSFSWLFH). Zn(2+) is bound at residue His191. Residues 192–203 (TVYCHSEKVSRT) are Cytoplasmic-facing. A helical membrane pass occupies residues 204–224 (FSKLDYSGIALLIMGSFVPWL). Over 225–234 (YYSFYCSPQP) the chain is Extracellular. A helical transmembrane segment spans residues 235-255 (RLIYLSIVCVLGISAIIVAQW). Over 256–264 (DRFATPKHR) the chain is Cytoplasmic. A helical membrane pass occupies residues 265–285 (QTRAGVFLGLGLSGVVPTMHF). Over 286-298 (TIAEGFVKATTVG) the chain is Extracellular. The helical transmembrane segment at 299–319 (QMGWFFLMAVMYITGAGLYAA) threads the bilayer. The Cytoplasmic portion of the chain corresponds to 320–337 (RIPERFFPGKFDIWFQSH). The Zn(2+) site is built by His337 and His341. The chain crosses the membrane as a helical span at residues 338-358 (QIFHVLVVAAAFVHFYGVSNL). Residues 359-375 (QEFRYGLEGGCTDDSLL) lie on the Extracellular side of the membrane.

The protein belongs to the ADIPOR family. As to quaternary structure, may form homooligomers and heterooligomers with ADIPOR2. Interacts with APPL2 (via BAR domain); hinders the accessibility of APPL1 to ADIPOR1; negatively regulates adiponectin signaling; ADIPOQ dissociates this interaction and facilitates the recruitment of APPL1 to ADIPOR1. Interacts with APPL1; ADIPOQ enhances this interaction; inhibites adiponectin-stimulated binding of APPL2 to ADIPOR1. In terms of tissue distribution, detected in brain and quadriceps muscle (at protein level). Widely expressed. Expressed in heart, kidney, liver, lung, skeletal muscle, white adipose tissue, brown adipose tissue, aorta and spleen. Weakly expressed in brain and testis.

The protein localises to the cell membrane. Its function is as follows. Receptor for ADIPOQ, an essential hormone secreted by adipocytes that regulates glucose and lipid metabolism. Required for normal glucose and fat homeostasis and for maintaining a normal body weight. ADIPOQ-binding activates a signaling cascade that leads to increased AMPK activity, and ultimately to increased fatty acid oxidation, increased glucose uptake and decreased gluconeogenesis. Has high affinity for globular adiponectin and low affinity for full-length adiponectin. In Mus musculus (Mouse), this protein is Adiponectin receptor protein 1.